The following is a 181-amino-acid chain: Mitochondrial pyruvate carrier-like protein (181 aa).

Helical transmembrane passes span 23–42 (YLASTHFWGPVANWGLPLAA) and 52–74 (IISGRMTTALIFYSMAFMRFAYR). The disordered stretch occupies residues 125-154 (TGSVDSSATSTGSVDSSATSTGSVDSSAAT).

Belongs to the mitochondrial pyruvate carrier (MPC) (TC 2.A.105) family.

It localises to the mitochondrion inner membrane. May mediate the uptake of pyruvate into mitochondria. This chain is Mitochondrial pyruvate carrier-like protein, found in Bos taurus (Bovine).